Consider the following 434-residue polypeptide: Enolase (434 aa).

(2R)-2-phosphoglycerate is bound at residue Q163. The active-site Proton donor is the E205. 3 residues coordinate Mg(2+): D242, E291, and D318. 4 residues coordinate (2R)-2-phosphoglycerate: K343, R372, S373, and K394. K343 functions as the Proton acceptor in the catalytic mechanism.

The protein belongs to the enolase family. Mg(2+) serves as cofactor.

The protein resides in the cytoplasm. The protein localises to the secreted. Its subcellular location is the cell surface. It localises to the cell wall. It catalyses the reaction (2R)-2-phosphoglycerate = phosphoenolpyruvate + H2O. The protein operates within carbohydrate degradation; glycolysis; pyruvate from D-glyceraldehyde 3-phosphate: step 4/5. Catalyzes the reversible conversion of 2-phosphoglycerate (2-PG) into phosphoenolpyruvate (PEP). It is essential for the degradation of carbohydrates via glycolysis. The protein is Enolase of Streptococcus pneumoniae serotype 2 (strain D39 / NCTC 7466).